A 72-amino-acid chain; its full sequence is MYKNPIKANLGEEVNNSLNYKDVSILSNFVNEQGKILPRRLTGLKSKQQKKVTKLIKQARIAALLPFVIGKN.

It belongs to the bacterial ribosomal protein bS18 family. As to quaternary structure, part of the 30S ribosomal subunit.

It localises to the plastid. Its subcellular location is the chloroplast. This Emiliania huxleyi (Coccolithophore) protein is Small ribosomal subunit protein bS18c.